We begin with the raw amino-acid sequence, 518 residues long: Putative beta-xylosidase (518 aa).

The active-site Proton acceptor is D47. E203 (proton donor) is an active-site residue.

Belongs to the glycosyl hydrolase 43 family.

It catalyses the reaction Hydrolysis of (1-&gt;4)-beta-D-xylans, to remove successive D-xylose residues from the non-reducing termini.. The protein is Putative beta-xylosidase of Xylanibacter ruminicola (Prevotella ruminicola).